An 81-amino-acid chain; its full sequence is Photosystem I iron-sulfur center (81 aa).

4Fe-4S ferredoxin-type domains are found at residues 2-31 (AHSV…MIPW) and 39-68 (IASA…VRVY). 8 residues coordinate [4Fe-4S] cluster: cysteine 11, cysteine 14, cysteine 17, cysteine 21, cysteine 48, cysteine 51, cysteine 54, and cysteine 58.

In terms of assembly, the eukaryotic PSI reaction center is composed of at least 11 subunits. The cofactor is [4Fe-4S] cluster.

It localises to the plastid. It is found in the chloroplast thylakoid membrane. It catalyses the reaction reduced [plastocyanin] + hnu + oxidized [2Fe-2S]-[ferredoxin] = oxidized [plastocyanin] + reduced [2Fe-2S]-[ferredoxin]. Its function is as follows. Apoprotein for the two 4Fe-4S centers FA and FB of photosystem I (PSI); essential for photochemical activity. FB is the terminal electron acceptor of PSI, donating electrons to ferredoxin. The C-terminus interacts with PsaA/B/D and helps assemble the protein into the PSI complex. Required for binding of PsaD and PsaE to PSI. PSI is a plastocyanin-ferredoxin oxidoreductase, converting photonic excitation into a charge separation, which transfers an electron from the donor P700 chlorophyll pair to the spectroscopically characterized acceptors A0, A1, FX, FA and FB in turn. The sequence is that of Photosystem I iron-sulfur center from Cycas taitungensis (Prince sago).